Here is a 307-residue protein sequence, read N- to C-terminus: Coproporphyrin III ferrochelatase (307 aa).

Fe-coproporphyrin III contacts are provided by residues tyrosine 12, arginine 29, 45 to 46, serine 53, and tyrosine 124; that span reads RY. Residues histidine 181 and glutamate 263 each coordinate Fe(2+).

This sequence belongs to the ferrochelatase family.

It is found in the cytoplasm. It catalyses the reaction Fe-coproporphyrin III + 2 H(+) = coproporphyrin III + Fe(2+). Its pathway is porphyrin-containing compound metabolism; protoheme biosynthesis. In terms of biological role, involved in coproporphyrin-dependent heme b biosynthesis. Catalyzes the insertion of ferrous iron into coproporphyrin III to form Fe-coproporphyrin III. The protein is Coproporphyrin III ferrochelatase of Staphylococcus epidermidis (strain ATCC 12228 / FDA PCI 1200).